The following is a 159-amino-acid chain: Ribosomal RNA large subunit methyltransferase H (159 aa).

S-adenosyl-L-methionine-binding positions include L76, G108, and F127–F132.

The protein belongs to the RNA methyltransferase RlmH family. Homodimer.

Its subcellular location is the cytoplasm. It catalyses the reaction pseudouridine(1915) in 23S rRNA + S-adenosyl-L-methionine = N(3)-methylpseudouridine(1915) in 23S rRNA + S-adenosyl-L-homocysteine + H(+). Specifically methylates the pseudouridine at position 1915 (m3Psi1915) in 23S rRNA. The protein is Ribosomal RNA large subunit methyltransferase H of Halothermothrix orenii (strain H 168 / OCM 544 / DSM 9562).